The following is a 299-amino-acid chain: Telomere repeat-binding factor 2 (299 aa).

Residues 1 to 61 (MGAPKQKWTP…KWRNISVTAL (61 aa)) enclose the HTH myb-type domain. Positions 28–57 (WRTILSDTEFSLILKSRSNVDLKDKWRNIS) form a DNA-binding region, H-T-H motif. Positions 93–116 (LTNDDERAKPTSPGGSGGGSPRTC) are disordered. Residues 121–189 (SITSLDKIIF…KIKHKYRFSS (69 aa)) form the H15 domain. The stretch at 243–288 (EAAEAAARAVAEAEFAITEAEQAAKEAERAEAEAEAAQIFAKAAMK) forms a coiled coil.

This sequence belongs to the histone H1/H5 family. SMH subfamily. In terms of assembly, forms a homodimer and heterodimers with TRB1 or TRB3. Interacts with TRB1 and TRB3. In terms of tissue distribution, ubiquitous.

The protein resides in the nucleus. Its subcellular location is the nucleolus. It localises to the chromosome. Binds preferentially double-stranded telomeric repeats, but it can also bind to the single G-rich telomeric strand. In Arabidopsis thaliana (Mouse-ear cress), this protein is Telomere repeat-binding factor 2 (TRB2).